Consider the following 513-residue polypeptide: Protein disulfide-isomerase (513 aa).

The signal sequence occupies residues 1–23; sequence MAIRSKAWISLLLALAVALSARA. The region spanning 24–145 is the Thioredoxin 1 domain; that stretch reads EEEPAAAAEG…IVDYLKKQVG (122 aa). Catalysis depends on nucleophile residues Cys63 and Cys66. An intrachain disulfide couples Cys63 to Cys66. An N-linked (GlcNAc...) asparagine glycan is attached at Asn279. A Thioredoxin 2 domain is found at 366 to 485; sequence FRNSEPIPEV…IVDFIKKSKE (120 aa). Active-site nucleophile residues include Cys408 and Cys411. Cys408 and Cys411 form a disulfide bridge. Residues 485–513 form a disordered region; it reads ETAAPHHHHHPGATGIREGSRAEPVKDEL. Basic and acidic residues predominate over residues 502-513; sequence EGSRAEPVKDEL. Positions 510 to 513 match the Prevents secretion from ER motif; it reads KDEL.

This sequence belongs to the protein disulfide isomerase family.

It is found in the endoplasmic reticulum lumen. It catalyses the reaction Catalyzes the rearrangement of -S-S- bonds in proteins.. Its function is as follows. Participates in the folding of proteins containing disulfide bonds, may be involved in glycosylation, prolyl hydroxylation and triglyceride transfer. The chain is Protein disulfide-isomerase (PDI) from Zea mays (Maize).